A 143-amino-acid chain; its full sequence is Ribosome-binding factor A (143 aa).

The span at 119-129 shows a compositional bias: basic and acidic residues; sequence AVGDKPAVPRD. The tract at residues 119-143 is disordered; that stretch reads AVGDKPAVPRDDNDDPVSDNPERDA.

The protein belongs to the RbfA family. As to quaternary structure, monomer. Binds 30S ribosomal subunits, but not 50S ribosomal subunits or 70S ribosomes.

It is found in the cytoplasm. Its function is as follows. One of several proteins that assist in the late maturation steps of the functional core of the 30S ribosomal subunit. Associates with free 30S ribosomal subunits (but not with 30S subunits that are part of 70S ribosomes or polysomes). Required for efficient processing of 16S rRNA. May interact with the 5'-terminal helix region of 16S rRNA. In Marinobacter nauticus (strain ATCC 700491 / DSM 11845 / VT8) (Marinobacter aquaeolei), this protein is Ribosome-binding factor A.